The primary structure comprises 402 residues: MAT+ sexual cell fertilization-promoting factor (402 aa).

A DNA-binding region (HMG box) is located at residues I169–R237. The tract at residues I246 to P272 is disordered.

Its subcellular location is the nucleus. Controls fertilization, probably by determining the mating type. This is MAT+ sexual cell fertilization-promoting factor (FPR1) from Podospora anserina (Pleurage anserina).